Reading from the N-terminus, the 56-residue chain is NNKCDIEFATSECEMRYQDCGEASSCTALIEECKTSLQEECNQASSDESSTTVRPE.

3 cysteine pairs are disulfide-bonded: C4–C41, C13–C33, and C20–C26.

Produced by the albumen gland of the egg cordons.

Its subcellular location is the secreted. Functionally, water-borne pheromone that attract the marine mollusk Aplysia into breeding aggregations and coordinate male and female reproductive behavior within the aggregation. The chain is Attractin (ATT) from Aplysia vaccaria (California black sea hare).